Here is a 266-residue protein sequence, read N- to C-terminus: 4-hydroxy-tetrahydrodipicolinate reductase (266 aa).

Residues 8-13 (GAAGRM) and Glu-33 each bind NAD(+). Residue Arg-34 coordinates NADP(+). Residues 97 to 99 (GST) and 121 to 124 (APNM) contribute to the NAD(+) site. His-154 functions as the Proton donor/acceptor in the catalytic mechanism. His-155 contributes to the (S)-2,3,4,5-tetrahydrodipicolinate binding site. Lys-158 functions as the Proton donor in the catalytic mechanism. 164–165 (GT) is a (S)-2,3,4,5-tetrahydrodipicolinate binding site.

Belongs to the DapB family.

The protein localises to the cytoplasm. It carries out the reaction (S)-2,3,4,5-tetrahydrodipicolinate + NAD(+) + H2O = (2S,4S)-4-hydroxy-2,3,4,5-tetrahydrodipicolinate + NADH + H(+). It catalyses the reaction (S)-2,3,4,5-tetrahydrodipicolinate + NADP(+) + H2O = (2S,4S)-4-hydroxy-2,3,4,5-tetrahydrodipicolinate + NADPH + H(+). It participates in amino-acid biosynthesis; L-lysine biosynthesis via DAP pathway; (S)-tetrahydrodipicolinate from L-aspartate: step 4/4. Functionally, catalyzes the conversion of 4-hydroxy-tetrahydrodipicolinate (HTPA) to tetrahydrodipicolinate. This is 4-hydroxy-tetrahydrodipicolinate reductase from Geobacter sulfurreducens (strain ATCC 51573 / DSM 12127 / PCA).